Here is a 273-residue protein sequence, read N- to C-terminus: Dermonecrotic toxin LhSicTox-alphaIA2bvi (273 aa).

Histidine 5 is a catalytic residue. Residues glutamate 25 and aspartate 27 each coordinate Mg(2+). Catalysis depends on histidine 41, which acts as the Nucleophile. Intrachain disulfides connect cysteine 45–cysteine 51 and cysteine 47–cysteine 190. Aspartate 85 contributes to the Mg(2+) binding site.

It belongs to the arthropod phospholipase D family. Class II subfamily. The cofactor is Mg(2+). In terms of tissue distribution, expressed by the venom gland.

The protein localises to the secreted. It catalyses the reaction an N-(acyl)-sphingosylphosphocholine = an N-(acyl)-sphingosyl-1,3-cyclic phosphate + choline. The enzyme catalyses an N-(acyl)-sphingosylphosphoethanolamine = an N-(acyl)-sphingosyl-1,3-cyclic phosphate + ethanolamine. It carries out the reaction a 1-acyl-sn-glycero-3-phosphocholine = a 1-acyl-sn-glycero-2,3-cyclic phosphate + choline. The catalysed reaction is a 1-acyl-sn-glycero-3-phosphoethanolamine = a 1-acyl-sn-glycero-2,3-cyclic phosphate + ethanolamine. Functionally, dermonecrotic toxins cleave the phosphodiester linkage between the phosphate and headgroup of certain phospholipids (sphingolipid and lysolipid substrates), forming an alcohol (often choline) and a cyclic phosphate. This toxin acts on sphingomyelin (SM). It may also act on ceramide phosphoethanolamine (CPE), lysophosphatidylcholine (LPC) and lysophosphatidylethanolamine (LPE), but not on lysophosphatidylserine (LPS), and lysophosphatidylglycerol (LPG). It acts by transphosphatidylation, releasing exclusively cyclic phosphate products as second products. Induces dermonecrosis, hemolysis, increased vascular permeability, edema, inflammatory response, and platelet aggregation. The protein is Dermonecrotic toxin LhSicTox-alphaIA2bvi of Loxosceles hirsuta (Recluse spider).